The sequence spans 573 residues: Protein DSE1 (573 aa).

WD repeat units lie at residues 144-185 (DFPP…GCAK), 315-351 (RKNT…GKPV), 356-395 (AKKG…NMKY), and 397-448 (ELVH…NGKG). Residues 500-509 (SDSSMLSLSN) show a composition bias toward low complexity. The tract at residues 500-519 (SDSSMLSLSNESDHSMTETS) is disordered. A Glycyl lysine isopeptide (Lys-Gly) (interchain with G-Cter in ubiquitin) cross-link involves residue K553.

It belongs to the WD repeat DSE1 family.

It localises to the bud neck. In terms of biological role, involved in cell wall metabolism and required for the separation of the mother and daughter cells. This is Protein DSE1 (DSE1) from Saccharomyces cerevisiae (strain ATCC 204508 / S288c) (Baker's yeast).